A 235-amino-acid polypeptide reads, in one-letter code: Orotidine 5'-phosphate decarboxylase (235 aa).

Residues D12, K34, 61–70, T116, R177, Q186, and R207 each bind substrate; that span reads DMKLLDIDNT. K63 functions as the Proton donor in the catalytic mechanism.

It belongs to the OMP decarboxylase family. Type 1 subfamily. In terms of assembly, homodimer.

The catalysed reaction is orotidine 5'-phosphate + H(+) = UMP + CO2. It functions in the pathway pyrimidine metabolism; UMP biosynthesis via de novo pathway; UMP from orotate: step 2/2. Catalyzes the decarboxylation of orotidine 5'-monophosphate (OMP) to uridine 5'-monophosphate (UMP). The sequence is that of Orotidine 5'-phosphate decarboxylase from Rhizobium leguminosarum bv. trifolii (strain WSM2304).